A 293-amino-acid chain; its full sequence is Mitochondrial glycine transporter (293 aa).

Solcar repeat units follow at residues 6–85 (GGVP…SRSA), 102–186 (LQSY…AKEM), and 208–291 (ASAM…LLKL). 6 helical membrane-spanning segments follow: residues 12 to 37 (LVSGFFGGLASVCALQPLDLLKTRLQ), 60 to 86 (GTLPSALRTSIGSALYLSLLNYSRSAL), 108 to 133 (LLTGALSRAAVGLVTMPITVIKVRYE), 161 to 184 (GAAATTLRDAPYAGLYVLLYEQAK), 212 to 238 (VNGVSAFLSASLATTLTAPFDTIKTRM), and 266 to 284 (GLSLRLCRKAMSACIAWGI).

It belongs to the mitochondrial carrier (TC 2.A.29) family. SLC25A38 subfamily.

Its subcellular location is the mitochondrion inner membrane. It carries out the reaction glycine(in) = glycine(out). Functionally, mitochondrial glycine transporter that imports glycine into the mitochondrial matrix. Plays an important role in providing glycine for the first enzymatic step in heme biosynthesis, the condensation of glycine with succinyl-CoA to produce 5-aminolevulinate (ALA) in the mitochondrial matrix. The polypeptide is Mitochondrial glycine transporter (Eremothecium gossypii (strain ATCC 10895 / CBS 109.51 / FGSC 9923 / NRRL Y-1056) (Yeast)).